The primary structure comprises 398 residues: Phosphoglycerate kinase (398 aa).

Substrate contacts are provided by residues 21 to 23, Arg36, 59 to 62, Arg119, and Arg157; these read DFN and HLGR. Residues Lys208, Gly296, Glu327, and 354-357 each bind ATP; that span reads GGDS.

This sequence belongs to the phosphoglycerate kinase family. Monomer.

It localises to the cytoplasm. It catalyses the reaction (2R)-3-phosphoglycerate + ATP = (2R)-3-phospho-glyceroyl phosphate + ADP. It participates in carbohydrate degradation; glycolysis; pyruvate from D-glyceraldehyde 3-phosphate: step 2/5. This chain is Phosphoglycerate kinase, found in Streptococcus pneumoniae (strain 70585).